A 388-amino-acid polypeptide reads, in one-letter code: LL-diaminopimelate aminotransferase (388 aa).

The substrate site is built by Tyr-15 and Gly-40. Pyridoxal 5'-phosphate contacts are provided by residues Tyr-69, 103–104 (SK), Tyr-128, Asn-178, Tyr-209, and 237–239 (SLS). Residues Lys-104, Tyr-128, and Asn-178 each contribute to the substrate site. The residue at position 240 (Lys-240) is an N6-(pyridoxal phosphate)lysine. Arg-248 provides a ligand contact to pyridoxal 5'-phosphate. Arg-366 contacts substrate.

This sequence belongs to the class-I pyridoxal-phosphate-dependent aminotransferase family. LL-diaminopimelate aminotransferase subfamily. Homodimer. Pyridoxal 5'-phosphate serves as cofactor.

The enzyme catalyses (2S,6S)-2,6-diaminopimelate + 2-oxoglutarate = (S)-2,3,4,5-tetrahydrodipicolinate + L-glutamate + H2O + H(+). The protein operates within amino-acid biosynthesis; L-lysine biosynthesis via DAP pathway; LL-2,6-diaminopimelate from (S)-tetrahydrodipicolinate (aminotransferase route): step 1/1. Involved in the synthesis of meso-diaminopimelate (m-DAP or DL-DAP), required for both lysine and peptidoglycan biosynthesis. Catalyzes the direct conversion of tetrahydrodipicolinate to LL-diaminopimelate. Can also use m-DAP instead of LL-DAP as the amino-group donor. In Syntrophobacter fumaroxidans (strain DSM 10017 / MPOB), this protein is LL-diaminopimelate aminotransferase.